We begin with the raw amino-acid sequence, 179 residues long: Large ribosomal subunit protein uL5 (179 aa).

Belongs to the universal ribosomal protein uL5 family. In terms of assembly, part of the 50S ribosomal subunit; part of the 5S rRNA/L5/L18/L25 subcomplex. Contacts the 5S rRNA and the P site tRNA. Forms a bridge to the 30S subunit in the 70S ribosome.

Functionally, this is one of the proteins that bind and probably mediate the attachment of the 5S RNA into the large ribosomal subunit, where it forms part of the central protuberance. In the 70S ribosome it contacts protein S13 of the 30S subunit (bridge B1b), connecting the 2 subunits; this bridge is implicated in subunit movement. Contacts the P site tRNA; the 5S rRNA and some of its associated proteins might help stabilize positioning of ribosome-bound tRNAs. This chain is Large ribosomal subunit protein uL5, found in Rickettsia peacockii (strain Rustic).